Here is a 171-residue protein sequence, read N- to C-terminus: 3-hydroxydecanoyl-[acyl-carrier-protein] dehydratase (171 aa).

Histidine 70 is an active-site residue.

This sequence belongs to the thioester dehydratase family. FabA subfamily. In terms of assembly, homodimer.

It localises to the cytoplasm. It carries out the reaction a (3R)-hydroxyacyl-[ACP] = a (2E)-enoyl-[ACP] + H2O. The catalysed reaction is (3R)-hydroxydecanoyl-[ACP] = (2E)-decenoyl-[ACP] + H2O. The enzyme catalyses (2E)-decenoyl-[ACP] = (3Z)-decenoyl-[ACP]. Its pathway is lipid metabolism; fatty acid biosynthesis. Necessary for the introduction of cis unsaturation into fatty acids. Catalyzes the dehydration of (3R)-3-hydroxydecanoyl-ACP to E-(2)-decenoyl-ACP and then its isomerization to Z-(3)-decenoyl-ACP. Can catalyze the dehydratase reaction for beta-hydroxyacyl-ACPs with saturated chain lengths up to 16:0, being most active on intermediate chain length. The protein is 3-hydroxydecanoyl-[acyl-carrier-protein] dehydratase of Shewanella baltica (strain OS223).